The chain runs to 293 residues: Ethanolamine ammonia-lyase small subunit (293 aa).

Residues Val207 and Glu228 each contribute to the adenosylcob(III)alamin site.

It belongs to the EutC family. The basic unit is a heterodimer which dimerizes to form tetramers. The heterotetramers trimerize; 6 large subunits form a core ring with 6 small subunits projecting outwards. It depends on adenosylcob(III)alamin as a cofactor.

Its subcellular location is the bacterial microcompartment. It catalyses the reaction ethanolamine = acetaldehyde + NH4(+). Its pathway is amine and polyamine degradation; ethanolamine degradation. Its function is as follows. Catalyzes the deamination of various vicinal amino-alcohols to oxo compounds. Allows this organism to utilize ethanolamine as the sole source of nitrogen and carbon in the presence of external vitamin B12. This Clostridioides difficile (strain 630) (Peptoclostridium difficile) protein is Ethanolamine ammonia-lyase small subunit.